A 396-amino-acid polypeptide reads, in one-letter code: MAKAKFQRTKPHVNIGTIGHVDHGKTTLTAAITKVLHDKYPELNESRAFDQIDNAPEERQRGITINISHVEYQTEKRHYAHVDAPGHADYIKNMITGAAQMDGAILVVAATDGPMPQTREHVLLARQVGVPYILVALNKSDAVDDEELLELVEMEVRELLAAQEFDEDAPVVRVSALKALEGDPKWVESVEQLMDAVDESIPDPVRETDRPFLMPVEDVFTITGRGTVVTGRVERGIINVNEEVEIVGIRPTSTKTTVTGVEMFRKLLDQGQAGDNVGLLLRGIKREDVERGQVVVKPGTTTPHTEFEGQVYILSKDEGGRHTPFFNNYRPQFYFRTTDVTGVVTLPEGTEMVMPGDNTNISVKLIQPVAMDDGLRFAIREGGRTVGAGRVVKIIK.

Positions 10–205 constitute a tr-type G domain; that stretch reads KPHVNIGTIG…AVDESIPDPV (196 aa). Residues 19–26 are G1; that stretch reads GHVDHGKT. 19-26 contributes to the GTP binding site; that stretch reads GHVDHGKT. T26 contacts Mg(2+). The segment at 62-66 is G2; the sequence is GITIN. The tract at residues 83–86 is G3; the sequence is DAPG. GTP is bound by residues 83 to 87 and 138 to 141; these read DAPGH and NKSD. The G4 stretch occupies residues 138–141; the sequence is NKSD. The G5 stretch occupies residues 175–177; that stretch reads SAL.

The protein belongs to the TRAFAC class translation factor GTPase superfamily. Classic translation factor GTPase family. EF-Tu/EF-1A subfamily. As to quaternary structure, monomer.

It is found in the cytoplasm. The enzyme catalyses GTP + H2O = GDP + phosphate + H(+). In terms of biological role, GTP hydrolase that promotes the GTP-dependent binding of aminoacyl-tRNA to the A-site of ribosomes during protein biosynthesis. In Mycobacterium marinum (strain ATCC BAA-535 / M), this protein is Elongation factor Tu.